The chain runs to 227 residues: Probable methylthioribulose-1-phosphate dehydratase (227 aa).

C87 contributes to the substrate binding site. H105 and H107 together coordinate Zn(2+). E129 (proton donor/acceptor) is an active-site residue. Residue H185 participates in Zn(2+) binding.

It belongs to the aldolase class II family. MtnB subfamily. The cofactor is Zn(2+).

It localises to the cytoplasm. It carries out the reaction 5-(methylsulfanyl)-D-ribulose 1-phosphate = 5-methylsulfanyl-2,3-dioxopentyl phosphate + H2O. Its pathway is amino-acid biosynthesis; L-methionine biosynthesis via salvage pathway; L-methionine from S-methyl-5-thio-alpha-D-ribose 1-phosphate: step 2/6. Its function is as follows. Catalyzes the dehydration of methylthioribulose-1-phosphate (MTRu-1-P) into 2,3-diketo-5-methylthiopentyl-1-phosphate (DK-MTP-1-P). The chain is Probable methylthioribulose-1-phosphate dehydratase from Drosophila mojavensis (Fruit fly).